Here is a 336-residue protein sequence, read N- to C-terminus: Fructose-1,6-bisphosphatase class 1 (336 aa).

The Mg(2+) site is built by Glu-92, Asp-115, Leu-117, and Asp-118. Residues 118–121 (DGSS), Asn-211, Tyr-244, 262–264 (YLY), and Lys-274 each bind substrate. Mg(2+) is bound at residue Glu-280.

Belongs to the FBPase class 1 family. As to quaternary structure, homotetramer. Mg(2+) is required as a cofactor.

It is found in the cytoplasm. It catalyses the reaction beta-D-fructose 1,6-bisphosphate + H2O = beta-D-fructose 6-phosphate + phosphate. It functions in the pathway carbohydrate biosynthesis; gluconeogenesis. In Aliivibrio fischeri (strain ATCC 700601 / ES114) (Vibrio fischeri), this protein is Fructose-1,6-bisphosphatase class 1.